The following is a 469-amino-acid chain: Cysteine--tRNA ligase (469 aa).

Zn(2+) is bound at residue Cys-33. The short motif at 35-45 (ATVQGLPHIGH) is the 'HIGH' region element. Cys-211, His-236, and Glu-240 together coordinate Zn(2+). The 'KMSKS' region signature appears at 267-271 (KMSKS). Lys-270 contacts ATP.

It belongs to the class-I aminoacyl-tRNA synthetase family. Monomer. Zn(2+) is required as a cofactor.

Its subcellular location is the cytoplasm. It catalyses the reaction tRNA(Cys) + L-cysteine + ATP = L-cysteinyl-tRNA(Cys) + AMP + diphosphate. This chain is Cysteine--tRNA ligase (cysS), found in Mycobacterium tuberculosis (strain CDC 1551 / Oshkosh).